Consider the following 206-residue polypeptide: Large ribosomal subunit protein uL3 (206 aa).

The tract at residues 116-149 is disordered; it reads GFQGAIKRHNQSRGPMSHGSRYHRRPGSMGPVAP.

Belongs to the universal ribosomal protein uL3 family. In terms of assembly, part of the 50S ribosomal subunit. Forms a cluster with proteins L14 and L19.

Functionally, one of the primary rRNA binding proteins, it binds directly near the 3'-end of the 23S rRNA, where it nucleates assembly of the 50S subunit. The sequence is that of Large ribosomal subunit protein uL3 from Shouchella clausii (strain KSM-K16) (Alkalihalobacillus clausii).